A 270-amino-acid polypeptide reads, in one-letter code: Nuclease P1 (270 aa).

The a divalent metal cation site is built by tryptophan 1, histidine 6, histidine 15, aspartate 45, and histidine 60. A substrate-binding site is contributed by 1–6; the sequence is WGALGH. Residues 45–51, 60–63, and 73–78 contribute to the substrate site; these read DEYRLTS, HFID, and NVDYER. 2 disulfide bridges follow: cysteine 72/cysteine 217 and cysteine 80/cysteine 85. Asparagine 92 carries an N-linked (GlcNAc...) asparagine glycan. Residues histidine 116, aspartate 120, and histidine 126 each contribute to the a divalent metal cation site. The segment at 116–164 is substrate binding; it reads HFIGDMTQPLHDEAYAVGGNKINVTFDGYHDNLHSDWDTYMPQKLIGGH. N-linked (GlcNAc...) asparagine glycosylation is present at asparagine 138. Histidine 149 and aspartate 153 together coordinate a divalent metal cation. Asparagine 184 and asparagine 197 each carry an N-linked (GlcNAc...) asparagine glycan.

This sequence belongs to the nuclease type I family. Zn(2+) serves as cofactor.

Its subcellular location is the secreted. It catalyses the reaction Endonucleolytic cleavage to 5'-phosphomononucleotide and 5'-phosphooligonucleotide end-products.. In terms of biological role, hydrolyzes only single-stranded DNA and RNA without apparent specificity for bases. This chain is Nuclease P1, found in Penicillium citrinum.